A 240-amino-acid chain; its full sequence is ATP-dependent dethiobiotin synthetase BioD (240 aa).

13–18 contacts ATP; the sequence is EVGKTV. A Mg(2+)-binding site is contributed by Thr-17. Residue Lys-38 is part of the active site. Ser-42 is a substrate binding site. ATP is bound by residues Asp-55, 116 to 119, 176 to 177, and 205 to 207; these read EGAG, ND, and PWL. Mg(2+) is bound by residues Asp-55 and Glu-116.

The protein belongs to the dethiobiotin synthetase family. As to quaternary structure, homodimer. Mg(2+) serves as cofactor.

Its subcellular location is the cytoplasm. It carries out the reaction (7R,8S)-7,8-diammoniononanoate + CO2 + ATP = (4R,5S)-dethiobiotin + ADP + phosphate + 3 H(+). The protein operates within cofactor biosynthesis; biotin biosynthesis; biotin from 7,8-diaminononanoate: step 1/2. Functionally, catalyzes a mechanistically unusual reaction, the ATP-dependent insertion of CO2 between the N7 and N8 nitrogen atoms of 7,8-diaminopelargonic acid (DAPA, also called 7,8-diammoniononanoate) to form a ureido ring. The polypeptide is ATP-dependent dethiobiotin synthetase BioD (Pseudescherichia vulneris (Escherichia vulneris)).